Reading from the N-terminus, the 494-residue chain is Transcription termination factor MTERF4, chloroplastic (494 aa).

The N-terminal 54 residues, 1 to 54 (MMKSLLFSAHPTSLLLPAPRLRRLLRLRAASSASASAPPRADRRSPGTPSRRPS), are a transit peptide targeting the chloroplast. Disordered stretches follow at residues 32–61 (SASA…YARP) and 457–494 (VEEM…EFVR). The segment covering 46 to 56 (PGTPSRRPSSS) has biased composition (low complexity). 2 stretches are compositionally biased toward acidic residues: residues 457 to 466 (VEEMEREDSS) and 473 to 494 (DEVE…EFVR).

It belongs to the mTERF family.

Its subcellular location is the plastid. It is found in the chloroplast stroma. In terms of biological role, transcription termination factor required for processing and steady-state levels of plastid transcripts. Required for splicing of the chloroplastic group II intron. Required for the accumulation of 16S and 23S ribosomes. In Zea mays (Maize), this protein is Transcription termination factor MTERF4, chloroplastic.